The following is a 1921-amino-acid chain: Putative callose synthase 6 (1921 aa).

Positions Met1 to Ala23 are disordered. Residues Met1 to Arg492 are Cytoplasmic-facing. A helical transmembrane segment spans residues Met493–Gly513. Residues Ser514 to Thr526 are Extracellular-facing. The chain crosses the membrane as a helical span at residues Val527 to Ile547. Topologically, residues Leu548 to Gln560 are cytoplasmic. The chain crosses the membrane as a helical span at residues Ile561–Ala581. Topologically, residues Tyr582 to Tyr611 are extracellular. A helical transmembrane segment spans residues Ala612–Phe632. The Cytoplasmic segment spans residues Arg633 to Phe674. A helical transmembrane segment spans residues Trp675–Ile695. At Thr696–Asn721 the chain is on the extracellular side. A helical transmembrane segment spans residues Ile722 to Ile742. Residues Trp743–Tyr1484 lie on the Cytoplasmic side of the membrane. Residues Phe1485–Leu1505 form a helical membrane-spanning segment. Over Tyr1506 to Ser1540 the chain is Extracellular. The chain crosses the membrane as a helical span at residues Ile1541–Gly1561. Residues Phe1562–Ser1564 are Cytoplasmic-facing. Residues Ala1565–Leu1585 form a helical membrane-spanning segment. At Gly1586–His1628 the chain is on the extracellular side. The helical transmembrane segment at Phe1629–Tyr1649 threads the bilayer. At Arg1650 to Tyr1655 the chain is on the cytoplasmic side. Residues Leu1656–Phe1676 traverse the membrane as a helical segment. At Asn1677–Arg1730 the chain is on the extracellular side. Residues Ile1731 to Leu1751 form a helical membrane-spanning segment. At Asn1752–Ser1759 the chain is on the cytoplasmic side. A helical membrane pass occupies residues Phe1760–Val1780. Residues Ser1781–Arg1796 lie on the Extracellular side of the membrane. Residues Ile1797 to Phe1817 traverse the membrane as a helical segment. The Cytoplasmic portion of the chain corresponds to Lys1818–Asp1823. A helical transmembrane segment spans residues Leu1824 to Val1844. At Leu1845–Asn1867 the chain is on the extracellular side. A helical transmembrane segment spans residues Ile1868–Glu1888. Topologically, residues Phe1889 to Lys1921 are cytoplasmic.

Belongs to the glycosyltransferase 48 family.

The protein resides in the cell membrane. It catalyses the reaction [(1-&gt;3)-beta-D-glucosyl](n) + UDP-alpha-D-glucose = [(1-&gt;3)-beta-D-glucosyl](n+1) + UDP + H(+). In terms of biological role, probably involved in callose synthesis, but not required for callose formation after wounding or pathogen attack. During plant growth and development, callose is found as a transitory component of the cell plate in dividing cells, is a major component of pollen mother cell walls and pollen tubes, and is found as a structural component of plasmodesmatal canals. This Arabidopsis thaliana (Mouse-ear cress) protein is Putative callose synthase 6 (CALS6).